Consider the following 446-residue polypeptide: N-succinylarginine dihydrolase (446 aa).

Residues alanine 19–serine 28, asparagine 110, and histidine 137–arginine 138 each bind substrate. Residue glutamate 174 is part of the active site. Arginine 213 lines the substrate pocket. Histidine 249 is a catalytic residue. Substrate-binding residues include aspartate 251 and asparagine 364. Cysteine 370 serves as the catalytic Nucleophile.

It belongs to the succinylarginine dihydrolase family. Homodimer.

It carries out the reaction N(2)-succinyl-L-arginine + 2 H2O + 2 H(+) = N(2)-succinyl-L-ornithine + 2 NH4(+) + CO2. Its pathway is amino-acid degradation; L-arginine degradation via AST pathway; L-glutamate and succinate from L-arginine: step 2/5. Catalyzes the hydrolysis of N(2)-succinylarginine into N(2)-succinylornithine, ammonia and CO(2). This chain is N-succinylarginine dihydrolase, found in Paraburkholderia xenovorans (strain LB400).